The following is a 1065-amino-acid chain: MPKRTDIETILVIGSGPIVIGQAAEFDYAGTQACLSLKEEGYRVILINSNPATIMTDTEIADKVYIEPISLDFVSRILRKERPDAILPTLGGQTGLNMAIELDKSGILDELGIEILGTKLDAIHKAEDRDLFRNLMYELGAPVPESDIIHSLDEAKRFVVKIGYPVIVRPAFTLGGTGGGICYNDQDLEEIVTSGLKYSPVTQCLLEKSIAGYKEIEYEVMRDAVDNAIVVCNMENVDPVGIHTGDSIVVAPTQTLSDRENQMLRNISLDIIRALKIEGGCNVQLALDPYSFNYYVIEVNPRVSRSSALASKATGYPIAKLAAKIAVGLTLDEIKNPVTGSTYACFEPALDYIVAKIPRWPFDKFESAKRNLGTQMKATGEVMALGRTFEEAMLKAVRSLETGQVHLELKHAEDNSDSWIEKRIRKAGDERLFFIGEALRRGVTIEQIHEWSAIDLFFLNKFKNIVDMEQTLADHKNDKEVLRTAKRLGFADKKIAELWDTTEEAIYAYRKEQGIIPVYKMVDTCAAEFESETPYFYGTYEEENESIKSEKPSVVVLGSGPIRIGQGVEFDYATVHSVWAIQEAGYEAIIINSNPETVSTDFSISDKLYFEPLTIEDVMHIIDLEQPIGVVVQFGGQTAINLADKLAANGVKILGTSLEDIDRAENRDKFEQALRDLNIPQPQGETAVSTVEALAIGERLGFPVLVRPSYVLGGRAMEIVYNQEELQHYMENAVEASPDHPVLVDRYLTGQEIEVDAICDGEHVLIPGIMEHIERAGVHSGDSISVYPPQKLTQYQKDTLVDYTTRLAKGLGIVGLMNIQYVISQGEVYVIEVNPRSSRTVPFLSKITNIPMANIATKAILGKSIVEQGYPTGLAPEQKGVFVKVPVFSFAKLRRVDITLGPEMKSTGEVMGKDATLEKALYKGLVAAGMEIRTEGTVLFTVSDKDKEEAIALAKRFSTVGYRIVATEGTAKAFEAAGVRTDVVGKIGAKGQTLIDLIQNGEAQLVVNTLTKGKQPARDGFRIRRESVENGVPCLTSLDTAEAMVRVIESMTFTAEEMPKAEVVH.

Residues 1 to 401 (MPKRTDIETI…AMLKAVRSLE (401 aa)) are carboxyphosphate synthetic domain. Positions 129, 169, 175, 176, 208, 210, 215, 241, 242, 243, 284, and 298 each coordinate ATP. An ATP-grasp 1 domain is found at 133–327 (RNLMYELGAP…IAKLAAKIAV (195 aa)). Residues Gln-284, Glu-298, and Asn-300 each contribute to the Mg(2+) site. 3 residues coordinate Mn(2+): Gln-284, Glu-298, and Asn-300. The interval 402–546 (TGQVHLELKH…YGTYEEENES (145 aa)) is oligomerization domain. The tract at residues 547-929 (IKSEKPSVVV…ALYKGLVAAG (383 aa)) is carbamoyl phosphate synthetic domain. The 191-residue stretch at 671 to 861 (EQALRDLNIP…MANIATKAIL (191 aa)) folds into the ATP-grasp 2 domain. Positions 707, 746, 748, 752, 777, 778, 779, 780, 820, and 832 each coordinate ATP. Positions 820, 832, and 834 each coordinate Mg(2+). Residues Gln-820, Glu-832, and Asn-834 each contribute to the Mn(2+) site. The region spanning 930–1065 (MEIRTEGTVL…EEMPKAEVVH (136 aa)) is the MGS-like domain. The tract at residues 930 to 1065 (MEIRTEGTVL…EEMPKAEVVH (136 aa)) is allosteric domain.

It belongs to the CarB family. Composed of two chains; the small (or glutamine) chain promotes the hydrolysis of glutamine to ammonia, which is used by the large (or ammonia) chain to synthesize carbamoyl phosphate. Tetramer of heterodimers (alpha,beta)4. Requires Mg(2+) as cofactor. It depends on Mn(2+) as a cofactor.

The enzyme catalyses hydrogencarbonate + L-glutamine + 2 ATP + H2O = carbamoyl phosphate + L-glutamate + 2 ADP + phosphate + 2 H(+). It carries out the reaction hydrogencarbonate + NH4(+) + 2 ATP = carbamoyl phosphate + 2 ADP + phosphate + 2 H(+). It participates in amino-acid biosynthesis; L-arginine biosynthesis; carbamoyl phosphate from bicarbonate: step 1/1. Its pathway is pyrimidine metabolism; UMP biosynthesis via de novo pathway; (S)-dihydroorotate from bicarbonate: step 1/3. Functionally, large subunit of the glutamine-dependent carbamoyl phosphate synthetase (CPSase). CPSase catalyzes the formation of carbamoyl phosphate from the ammonia moiety of glutamine, carbonate, and phosphate donated by ATP, constituting the first step of 2 biosynthetic pathways, one leading to arginine and/or urea and the other to pyrimidine nucleotides. The large subunit (synthetase) binds the substrates ammonia (free or transferred from glutamine from the small subunit), hydrogencarbonate and ATP and carries out an ATP-coupled ligase reaction, activating hydrogencarbonate by forming carboxy phosphate which reacts with ammonia to form carbamoyl phosphate. The protein is Carbamoyl phosphate synthase large chain of Lysinibacillus sphaericus (strain C3-41).